The sequence spans 141 residues: 3-hydroxyacyl-[acyl-carrier-protein] dehydratase FabZ (141 aa).

His49 is a catalytic residue.

Belongs to the thioester dehydratase family. FabZ subfamily.

Its subcellular location is the cytoplasm. The enzyme catalyses a (3R)-hydroxyacyl-[ACP] = a (2E)-enoyl-[ACP] + H2O. In terms of biological role, involved in unsaturated fatty acids biosynthesis. Catalyzes the dehydration of short chain beta-hydroxyacyl-ACPs and long chain saturated and unsaturated beta-hydroxyacyl-ACPs. The protein is 3-hydroxyacyl-[acyl-carrier-protein] dehydratase FabZ (fabZ2) of Enterococcus faecalis (strain ATCC 700802 / V583).